The chain runs to 433 residues: Elongation factor 1-alpha (433 aa).

A tr-type G domain is found at 5-220 (KPHINVVFIG…ALDMLKPPQL (216 aa)). The segment at 14–21 (GHVDHGKS) is G1. 14–21 (GHVDHGKS) is a binding site for GTP. S21 provides a ligand contact to Mg(2+). Residues 70 to 74 (GVTID) form a G2 region. Residues 91-94 (DAPG) form a G3 region. Residues 91–95 (DAPGH) and 146–149 (NKMD) contribute to the GTP site. The G4 stretch occupies residues 146 to 149 (NKMD). Positions 186–188 (ASF) are G5.

This sequence belongs to the TRAFAC class translation factor GTPase superfamily. Classic translation factor GTPase family. EF-Tu/EF-1A subfamily.

The protein resides in the cytoplasm. It catalyses the reaction GTP + H2O = GDP + phosphate + H(+). In terms of biological role, GTP hydrolase that promotes the GTP-dependent binding of aminoacyl-tRNA to the A-site of ribosomes during protein biosynthesis. The polypeptide is Elongation factor 1-alpha (Nanoarchaeum equitans (strain Kin4-M)).